The primary structure comprises 238 residues: Deoxyribose-phosphate aldolase (238 aa).

D102 serves as the catalytic Proton donor/acceptor. K164 serves as the catalytic Schiff-base intermediate with acetaldehyde. K193 functions as the Proton donor/acceptor in the catalytic mechanism.

The protein belongs to the DeoC/FbaB aldolase family. DeoC type 1 subfamily.

It is found in the cytoplasm. It catalyses the reaction 2-deoxy-D-ribose 5-phosphate = D-glyceraldehyde 3-phosphate + acetaldehyde. It participates in carbohydrate degradation; 2-deoxy-D-ribose 1-phosphate degradation; D-glyceraldehyde 3-phosphate and acetaldehyde from 2-deoxy-alpha-D-ribose 1-phosphate: step 2/2. Catalyzes a reversible aldol reaction between acetaldehyde and D-glyceraldehyde 3-phosphate to generate 2-deoxy-D-ribose 5-phosphate. This chain is Deoxyribose-phosphate aldolase, found in Rhodospirillum rubrum (strain ATCC 11170 / ATH 1.1.1 / DSM 467 / LMG 4362 / NCIMB 8255 / S1).